The following is a 42-amino-acid chain: Photosystem I reaction center subunit IX (42 aa).

A helical membrane pass occupies residues 7–27 (YLSVAPVLSTLWFGSLAGLLI).

It belongs to the PsaJ family.

It localises to the plastid. Its subcellular location is the chloroplast thylakoid membrane. In terms of biological role, may help in the organization of the PsaE and PsaF subunits. The protein is Photosystem I reaction center subunit IX of Daucus carota (Wild carrot).